A 454-amino-acid polypeptide reads, in one-letter code: Probable glycine dehydrogenase (decarboxylating) subunit 1 (454 aa).

It belongs to the GcvP family. N-terminal subunit subfamily. As to quaternary structure, the glycine cleavage system is composed of four proteins: P, T, L and H. In this organism, the P 'protein' is a heterodimer of two subunits.

The catalysed reaction is N(6)-[(R)-lipoyl]-L-lysyl-[glycine-cleavage complex H protein] + glycine + H(+) = N(6)-[(R)-S(8)-aminomethyldihydrolipoyl]-L-lysyl-[glycine-cleavage complex H protein] + CO2. The glycine cleavage system catalyzes the degradation of glycine. The P protein binds the alpha-amino group of glycine through its pyridoxal phosphate cofactor; CO(2) is released and the remaining methylamine moiety is then transferred to the lipoamide cofactor of the H protein. The protein is Probable glycine dehydrogenase (decarboxylating) subunit 1 of Sorangium cellulosum (strain So ce56) (Polyangium cellulosum (strain So ce56)).